The chain runs to 343 residues: Protein RecA (343 aa).

Residue 66–73 (GPESSGKT) participates in ATP binding.

The protein belongs to the RecA family.

The protein localises to the cytoplasm. Can catalyze the hydrolysis of ATP in the presence of single-stranded DNA, the ATP-dependent uptake of single-stranded DNA by duplex DNA, and the ATP-dependent hybridization of homologous single-stranded DNAs. It interacts with LexA causing its activation and leading to its autocatalytic cleavage. This Rickettsia canadensis (strain McKiel) protein is Protein RecA.